Here is a 291-residue protein sequence, read N- to C-terminus: Phosphatidylglycerol--prolipoprotein diacylglyceryl transferase (291 aa).

7 consecutive transmembrane segments (helical) span residues 21-41 (VALH…MWLA), 60-80 (LLYA…VLFY), 96-116 (WDGG…MIIF), 130-150 (FIAP…FING), 198-218 (SQLY…NLFI), 225-245 (GAVS…VEFF), and 260-280 (ISMG…MMVW). Arg143 is a binding site for a 1,2-diacyl-sn-glycero-3-phospho-(1'-sn-glycerol).

It belongs to the Lgt family.

It localises to the cell inner membrane. It catalyses the reaction L-cysteinyl-[prolipoprotein] + a 1,2-diacyl-sn-glycero-3-phospho-(1'-sn-glycerol) = an S-1,2-diacyl-sn-glyceryl-L-cysteinyl-[prolipoprotein] + sn-glycerol 1-phosphate + H(+). It functions in the pathway protein modification; lipoprotein biosynthesis (diacylglyceryl transfer). Functionally, catalyzes the transfer of the diacylglyceryl group from phosphatidylglycerol to the sulfhydryl group of the N-terminal cysteine of a prolipoprotein, the first step in the formation of mature lipoproteins. This is Phosphatidylglycerol--prolipoprotein diacylglyceryl transferase from Salmonella choleraesuis (strain SC-B67).